The following is a 96-amino-acid chain: MKCFAQIVVLLLVIAFSHGAVITGACDKDVQCGSGTCCAASAWSRNIRFCIPLGNSGEDCHPASHKVPYDGKRLSSLCPCKSGLTCSKSGEKFKCS.

A signal peptide spans 1–19; that stretch reads MKCFAQIVVLLLVIAFSHG. Residues 20 to 24 form a may be important for binding to prokineticin receptor 2 region; sequence AVITG. 5 disulfides stabilise this stretch: Cys26–Cys38, Cys32–Cys50, Cys37–Cys78, Cys60–Cys86, and Cys80–Cys95.

In terms of tissue distribution, expressed by the skin glands.

Its subcellular location is the secreted. Functionally, potent agonist for both PKR1/PROKR1 and PKR2/PROKR2, and inducer of a potent and long-lasting hyperalgesia. Shows an EC(50) of 0.264 nM, when tested on neuroblastoma cells (SH-SY5Y) which endogenously express mainly PKR2/PROKR2. Also potentiates capsaicin-induced TRPV1 current, when tested on DRG neurons. Induces a biphasic hyperalgesia to tactile and thermal stimuli after systemic injection of this protein into rat. The initial phase of hyperalgesia is caused by a local action on nociceptors, because intraplantar injection of this protein causes a strong and localized hyperalgesia with a similar time course to that of the initial phase of hyperalgesia seen with systemic injection. The secondary phase of hyperalgesia is not seen with local intraplantar injection and is therefore probably attributable to a central action of this protein. At subnanomolar concentrations, this protein both induces potent chemotaxis of macrophages and stimulates LPS-induced production of the pro-inflammatory cytokines IL-1 and IL-12. In vivo, this protein potently stimulates the contraction of the guinea-pig gastrointestinal (GI) smooth muscle (at nanomolar concentration). The polypeptide is Prokineticin Bv8 (Bombina variegata (Yellow-bellied toad)).